Here is a 274-residue protein sequence, read N- to C-terminus: 3-methyl-2-oxobutanoate hydroxymethyltransferase (274 aa).

2 residues coordinate Mg(2+): Asp46 and Asp85. Residues 46 to 47 (DS), Asp85, and Lys115 contribute to the 3-methyl-2-oxobutanoate site. Residue Glu117 coordinates Mg(2+). Catalysis depends on Glu184, which acts as the Proton acceptor.

The protein belongs to the PanB family. Homodecamer; pentamer of dimers. Mg(2+) is required as a cofactor.

The protein localises to the cytoplasm. It catalyses the reaction 3-methyl-2-oxobutanoate + (6R)-5,10-methylene-5,6,7,8-tetrahydrofolate + H2O = 2-dehydropantoate + (6S)-5,6,7,8-tetrahydrofolate. Its pathway is cofactor biosynthesis; (R)-pantothenate biosynthesis; (R)-pantoate from 3-methyl-2-oxobutanoate: step 1/2. Its function is as follows. Catalyzes the reversible reaction in which hydroxymethyl group from 5,10-methylenetetrahydrofolate is transferred onto alpha-ketoisovalerate to form ketopantoate. The sequence is that of 3-methyl-2-oxobutanoate hydroxymethyltransferase from Thermoanaerobacter pseudethanolicus (strain ATCC 33223 / 39E) (Clostridium thermohydrosulfuricum).